The primary structure comprises 253 residues: Sulfate transporter CysZ (253 aa).

A run of 4 helical transmembrane segments spans residues 31–51, 75–95, 151–171, and 222–242; these read FVILPLLVNILLMGGAFWWLF, LLWPLAVISVLLVFGYFFSTI, IVLLILYFIPGIGQTVAPVLW, and IPLLNLFIMPVAVCGATAMWV.

This sequence belongs to the CysZ family.

It localises to the cell inner membrane. In terms of biological role, high affinity, high specificity proton-dependent sulfate transporter, which mediates sulfate uptake. Provides the sulfur source for the cysteine synthesis pathway. The sequence is that of Sulfate transporter CysZ from Escherichia coli O81 (strain ED1a).